Consider the following 113-residue polypeptide: UPF0482 protein YnfB (113 aa).

Residues 1-28 (MNNTLSKRLCLTAMLTLAAVVYTTSAFA) form the signal peptide.

It belongs to the UPF0482 family.

The protein is UPF0482 protein YnfB of Salmonella agona (strain SL483).